The primary structure comprises 141 residues: VLSPADKSNVKGVFAKIGGQAEEYGADALERMFATYPQTKTYFPHFDLGKGSAQVKGHGKKVAAALVEAVNNIDDLAGALSKLSDLHAQKLRVDPVNFKLLGQCFLVVVATGNPALLTPEVHAPLDKFLCAVGTVLTAKYR.

The 141-residue stretch at 1–141 folds into the Globin domain; that stretch reads VLSPADKSNV…VGTVLTAKYR (141 aa). Residue His58 coordinates O2. Position 87 (His87) interacts with heme b.

Belongs to the globin family. As to quaternary structure, heterotetramer of two alpha chains and two beta chains. As to expression, red blood cells.

Its function is as follows. Involved in oxygen transport from the lung to the various peripheral tissues. This chain is Hemoglobin subunit alpha-A (HBAA), found in Passer montanus (Eurasian tree sparrow).